The chain runs to 366 residues: Chorismate synthase (366 aa).

NADP(+)-binding residues include Arg48 and Arg54. Residues 129–131 (RSS), 241–242 (NA), Gly290, 305–309 (KPTSS), and Arg331 contribute to the FMN site.

Belongs to the chorismate synthase family. In terms of assembly, homotetramer. It depends on FMNH2 as a cofactor.

The catalysed reaction is 5-O-(1-carboxyvinyl)-3-phosphoshikimate = chorismate + phosphate. Its pathway is metabolic intermediate biosynthesis; chorismate biosynthesis; chorismate from D-erythrose 4-phosphate and phosphoenolpyruvate: step 7/7. In terms of biological role, catalyzes the anti-1,4-elimination of the C-3 phosphate and the C-6 proR hydrogen from 5-enolpyruvylshikimate-3-phosphate (EPSP) to yield chorismate, which is the branch point compound that serves as the starting substrate for the three terminal pathways of aromatic amino acid biosynthesis. This reaction introduces a second double bond into the aromatic ring system. The chain is Chorismate synthase from Nitrobacter hamburgensis (strain DSM 10229 / NCIMB 13809 / X14).